A 145-amino-acid polypeptide reads, in one-letter code: 3-hydroxyacyl-[acyl-carrier-protein] dehydratase FabZ (145 aa).

His-47 is a catalytic residue.

Belongs to the thioester dehydratase family. FabZ subfamily.

It is found in the cytoplasm. The enzyme catalyses a (3R)-hydroxyacyl-[ACP] = a (2E)-enoyl-[ACP] + H2O. Its function is as follows. Involved in unsaturated fatty acids biosynthesis. Catalyzes the dehydration of short chain beta-hydroxyacyl-ACPs and long chain saturated and unsaturated beta-hydroxyacyl-ACPs. The sequence is that of 3-hydroxyacyl-[acyl-carrier-protein] dehydratase FabZ from Aromatoleum aromaticum (strain DSM 19018 / LMG 30748 / EbN1) (Azoarcus sp. (strain EbN1)).